The primary structure comprises 125 residues: Large ribosomal subunit protein bL12 (125 aa).

The protein belongs to the bacterial ribosomal protein bL12 family. As to quaternary structure, homodimer. Part of the ribosomal stalk of the 50S ribosomal subunit. Forms a multimeric L10(L12)X complex, where L10 forms an elongated spine to which 2 to 4 L12 dimers bind in a sequential fashion. Binds GTP-bound translation factors.

Forms part of the ribosomal stalk which helps the ribosome interact with GTP-bound translation factors. Is thus essential for accurate translation. The sequence is that of Large ribosomal subunit protein bL12 from Methylobacterium radiotolerans (strain ATCC 27329 / DSM 1819 / JCM 2831 / NBRC 15690 / NCIMB 10815 / 0-1).